The chain runs to 740 residues: Ribosomal protein S6 kinase alpha-3 (740 aa).

The interval Met-1 to Gln-26 is disordered. Residues Phe-68 to Phe-327 enclose the Protein kinase 1 domain. Residues Leu-74–Val-82 and Lys-100 contribute to the ATP site. Asp-193 functions as the Proton acceptor in the catalytic mechanism. At Ser-227 the chain carries Phosphoserine; by PDPK1. In terms of domain architecture, AGC-kinase C-terminal spans Ser-328–Gln-397. Residue Thr-365 is modified to Phosphothreonine. Ser-369 and Ser-375 each carry phosphoserine. Phosphoserine; by autocatalysis and MAPKAPK2 is present on Ser-386. At Ser-415 the chain carries Phosphoserine. The region spanning Tyr-422–Ile-679 is the Protein kinase 2 domain. ATP is bound by residues Ile-428–Cys-436 and Lys-451. Tyr-529 carries the phosphotyrosine; by FGFR3 modification. Asp-539 acts as the Proton acceptor in catalysis. Phosphoserine is present on residues Ser-556 and Ser-715.

This sequence belongs to the protein kinase superfamily. AGC Ser/Thr protein kinase family. S6 kinase subfamily. Forms a complex with either MAPK1/ERK2 or MAPK3/ERK1 in quiescent cells. Transiently dissociates following mitogenic stimulation. Interacts with NFATC4, ETV1/ER81 and FGFR1. Requires Mg(2+) as cofactor. Activated by phosphorylation at Ser-227 by PDPK1. Autophosphorylated on Ser-386, as part of the activation process. May be phosphorylated at Thr-365 and Ser-369 by MAPK1/ERK2 and MAPK3/ERK1. Can also be activated via phosphorylation at Ser-386 by MAPKAPK2. Post-translationally, N-terminal myristoylation results in an activated kinase in the absence of added growth factors. Intestine, thymus, lung, heart and brain.

Its subcellular location is the nucleus. The protein localises to the cytoplasm. The enzyme catalyses L-seryl-[protein] + ATP = O-phospho-L-seryl-[protein] + ADP + H(+). It catalyses the reaction L-threonyl-[protein] + ATP = O-phospho-L-threonyl-[protein] + ADP + H(+). Its activity is regulated as follows. Upon extracellular signal or mitogen stimulation, phosphorylated at Thr-577 in the C-terminal kinase domain (CTKD) by MAPK1/ERK2 and MAPK3/ERK1. The activated CTKD then autophosphorylates Ser-386, allowing binding of PDPK1, which in turn phosphorylates Ser-227 in the N-terminal kinase domain (NTDK) leading to the full activation of the protein and subsequent phosphorylation of the substrates by the NTKD. Functionally, serine/threonine-protein kinase that acts downstream of ERK (MAPK1/ERK2 and MAPK3/ERK1) signaling and mediates mitogenic and stress-induced activation of the transcription factors CREB1, ETV1/ER81 and NR4A1/NUR77, regulates translation through RPS6 and EIF4B phosphorylation, and mediates cellular proliferation, survival, and differentiation by modulating mTOR signaling and repressing pro-apoptotic function of BAD and DAPK1. In fibroblast, is required for EGF-stimulated phosphorylation of CREB1 and histone H3 at 'Ser-10', which results in the subsequent transcriptional activation of several immediate-early genes. In response to mitogenic stimulation (EGF and PMA), phosphorylates and activates NR4A1/NUR77 and ETV1/ER81 transcription factors and the cofactor CREBBP. Upon insulin-derived signal, acts indirectly on the transcription regulation of several genes by phosphorylating GSK3B at 'Ser-9' and inhibiting its activity. Phosphorylates RPS6 in response to serum or EGF via an mTOR-independent mechanism and promotes translation initiation by facilitating assembly of the preinitiation complex. In response to insulin, phosphorylates EIF4B, enhancing EIF4B affinity for the EIF3 complex and stimulating cap-dependent translation. Is involved in the mTOR nutrient-sensing pathway by directly phosphorylating TSC2 at 'Ser-1798', which potently inhibits TSC2 ability to suppress mTOR signaling, and mediates phosphorylation of RPTOR, which regulates mTORC1 activity and may promote rapamycin-sensitive signaling independently of the PI3K/AKT pathway. Mediates cell survival by phosphorylating the pro-apoptotic proteins BAD and DAPK1 and suppressing their pro-apoptotic function. Promotes the survival of hepatic stellate cells by phosphorylating CEBPB in response to the hepatotoxin carbon tetrachloride (CCl4). Is involved in cell cycle regulation by phosphorylating the CDK inhibitor CDKN1B, which promotes CDKN1B association with 14-3-3 proteins and prevents its translocation to the nucleus and inhibition of G1 progression. In LPS-stimulated dendritic cells, is involved in TLR4-induced macropinocytosis, and in myeloma cells, acts as effector of FGFR3-mediated transformation signaling, after direct phosphorylation at Tyr-529 by FGFR3. Negatively regulates EGF-induced MAPK1/3 phosphorylation via phosphorylation of SOS1. Phosphorylates SOS1 at 'Ser-1134' and 'Ser-1161' that create YWHAB and YWHAE binding sites and which contribute to the negative regulation of MAPK1/3 phosphorylation. Phosphorylates EPHA2 at 'Ser-897', the RPS6KA-EPHA2 signaling pathway controls cell migration. Acts as a regulator of osteoblast differentiation by mediating phosphorylation of ATF4, thereby promoting ATF4 transactivation activity. The sequence is that of Ribosomal protein S6 kinase alpha-3 (Rps6ka3) from Mus musculus (Mouse).